The primary structure comprises 295 residues: 4-hydroxy-tetrahydrodipicolinate synthase 1 (295 aa).

Pyruvate is bound at residue Thr46. The active-site Proton donor/acceptor is Tyr134. Lys162 acts as the Schiff-base intermediate with substrate in catalysis. Val204 provides a ligand contact to pyruvate.

It belongs to the DapA family. Homotetramer; dimer of dimers.

The protein resides in the cytoplasm. It catalyses the reaction L-aspartate 4-semialdehyde + pyruvate = (2S,4S)-4-hydroxy-2,3,4,5-tetrahydrodipicolinate + H2O + H(+). It participates in amino-acid biosynthesis; L-lysine biosynthesis via DAP pathway; (S)-tetrahydrodipicolinate from L-aspartate: step 3/4. Functionally, catalyzes the condensation of (S)-aspartate-beta-semialdehyde [(S)-ASA] and pyruvate to 4-hydroxy-tetrahydrodipicolinate (HTPA). This chain is 4-hydroxy-tetrahydrodipicolinate synthase 1, found in Halalkalibacterium halodurans (strain ATCC BAA-125 / DSM 18197 / FERM 7344 / JCM 9153 / C-125) (Bacillus halodurans).